Here is a 478-residue protein sequence, read N- to C-terminus: tRNA modification GTPase MnmE (478 aa).

(6S)-5-formyl-5,6,7,8-tetrahydrofolate is bound by residues arginine 25, glutamate 82, and lysine 135. Residues 231-400 (GIKVVIAGQP…LREQLLRVVG (170 aa)) enclose the TrmE-type G domain. Asparagine 241 contacts K(+). GTP-binding positions include 241 to 246 (NVGKSS), 260 to 266 (TPVAGTT), and 285 to 288 (DTAG). Residue serine 245 coordinates Mg(2+). Positions 260, 262, and 265 each coordinate K(+). Mg(2+) is bound at residue threonine 266. A (6S)-5-formyl-5,6,7,8-tetrahydrofolate-binding site is contributed by lysine 478.

The protein belongs to the TRAFAC class TrmE-Era-EngA-EngB-Septin-like GTPase superfamily. TrmE GTPase family. As to quaternary structure, homodimer. Heterotetramer of two MnmE and two MnmG subunits. K(+) is required as a cofactor.

The protein resides in the cytoplasm. Exhibits a very high intrinsic GTPase hydrolysis rate. Involved in the addition of a carboxymethylaminomethyl (cmnm) group at the wobble position (U34) of certain tRNAs, forming tRNA-cmnm(5)s(2)U34. In Polaromonas naphthalenivorans (strain CJ2), this protein is tRNA modification GTPase MnmE.